Here is a 216-residue protein sequence, read N- to C-terminus: 3-keto-L-gulonate-6-phosphate decarboxylase UlaD (216 aa).

Aspartate 11 contributes to the substrate binding site. Residues glutamate 33 and aspartate 62 each contribute to the Mg(2+) site. A substrate-binding site is contributed by arginine 192.

The protein belongs to the HPS/KGPDC family. KGPDC subfamily. Homodimer. Mg(2+) serves as cofactor.

It catalyses the reaction 3-dehydro-L-gulonate 6-phosphate + H(+) = L-xylulose 5-phosphate + CO2. Its pathway is cofactor degradation; L-ascorbate degradation; D-xylulose 5-phosphate from L-ascorbate: step 2/4. In terms of biological role, catalyzes the decarboxylation of 3-keto-L-gulonate-6-P into L-xylulose-5-P. Is involved in the anaerobic L-ascorbate utilization. In Salmonella choleraesuis (strain SC-B67), this protein is 3-keto-L-gulonate-6-phosphate decarboxylase UlaD.